A 422-amino-acid chain; its full sequence is L-2-hydroxyglutarate dehydrogenase (422 aa).

It belongs to the L2HGDH family. FAD serves as cofactor.

It is found in the cell inner membrane. The catalysed reaction is (S)-2-hydroxyglutarate + a quinone = a quinol + 2-oxoglutarate. Its pathway is amino-acid degradation. Functionally, catalyzes the dehydrogenation of L-2-hydroxyglutarate (L2HG) to alpha-ketoglutarate and couples to the respiratory chain by feeding electrons from the reaction into the membrane quinone pool. Functions in a L-lysine degradation pathway that proceeds via cadaverine, glutarate and L-2-hydroxyglutarate. Also displays some oxidase activity in vitro on L-2-hydroxyglutarate with O2 as the electron acceptor, but this activity is most likely not physiological. In Escherichia coli O17:K52:H18 (strain UMN026 / ExPEC), this protein is L-2-hydroxyglutarate dehydrogenase.